A 110-amino-acid chain; its full sequence is Red pigment-concentrating prohormone (110 aa).

The first 25 residues, 1 to 25 (MVRRTGVTLLVVALVVVALVSSVSA), serve as a signal peptide directing secretion. Q26 carries the pyrrolidone carboxylic acid modification. The residue at position 33 (W33) is a Tryptophan amide.

This sequence belongs to the AKH/HRTH/RPCH family.

It localises to the secreted. In terms of biological role, this hormone adapts the animal to light backgrounds by stimulating concentration of the pigment of its red body-chromatophores. The chain is Red pigment-concentrating prohormone from Carcinus maenas (Common shore crab).